The following is a 533-amino-acid chain: Protein trichome birefringence-like 18 (533 aa).

Residues 21-41 (VSTVAIAIGGLASFFVFGLLL) traverse the membrane as a helical; Signal-anchor for type II membrane protein segment. Residues 93-171 (SDSSSGLPVV…PDDVSETASA (79 aa)) form a disordered region. Over residues 113-154 (SSDRKLETPLTQEKEDLVSSDITEKTDVQSGERETNVSKAED) the composition is skewed to basic and acidic residues. The GDS motif motif lies at 248–250 (GDS). The interval 475-502 (HDGHPGPFRSPDPNKITKRGPDGRPPPQ) is disordered. The DCXHWCLPGXXDXWN motif signature appears at 503 to 517 (DCLHWCMPGPVDTWN).

The protein belongs to the PC-esterase family. TBL subfamily.

It localises to the membrane. Its function is as follows. May act as a bridging protein that binds pectin and other cell wall polysaccharides. Probably involved in maintaining esterification of pectins. May be involved in the specific O-acetylation of cell wall polymers. The polypeptide is Protein trichome birefringence-like 18 (TBL18) (Arabidopsis thaliana (Mouse-ear cress)).